The chain runs to 135 residues: Phosphoinositide-interacting protein (135 aa).

The interval 1 to 21 is disordered; the sequence is MEVLPKALEVDERSPESKDLL. A compositionally biased stretch (basic and acidic residues) spans 8-19; it reads LEVDERSPESKD. 2 helical membrane-spanning segments follow: residues 54–74 and 92–112; these read IIIM…TCVA and PAFL…VPII.

Interacts with TRPV1. Strongly expressed in most dorsal root ganglia (DRG) and trigeminal neurons. Expressed by most peptidergic (CGRP+) and non-peptidergic (IB4+) DRG neurons. Weakly expressed in other parts of the peripheral nervous system (PNS) including sympathetic and enteric neurons. Not expressed in the spinal cord.

The protein resides in the membrane. Functionally, regulatory subunit of TRPV1, a molecular sensor of noxious heat and capsaicin. Positively regulates TRPV1 channel activity via phosphatidylinositol 4,5-bisphosphate (PIP2). Binds various phosphoinositide, including phosphatidylinositol 4,5-bisphosphate (PIP2), but not phosphatidylinositol (PI). The chain is Phosphoinositide-interacting protein (Pirt) from Mus musculus (Mouse).